A 286-amino-acid chain; its full sequence is Bifunctional protein FolD (286 aa).

Residues 166 to 168 (GAS) and isoleucine 232 contribute to the NADP(+) site.

Belongs to the tetrahydrofolate dehydrogenase/cyclohydrolase family. As to quaternary structure, homodimer.

The catalysed reaction is (6R)-5,10-methylene-5,6,7,8-tetrahydrofolate + NADP(+) = (6R)-5,10-methenyltetrahydrofolate + NADPH. It catalyses the reaction (6R)-5,10-methenyltetrahydrofolate + H2O = (6R)-10-formyltetrahydrofolate + H(+). It participates in one-carbon metabolism; tetrahydrofolate interconversion. Its function is as follows. Catalyzes the oxidation of 5,10-methylenetetrahydrofolate to 5,10-methenyltetrahydrofolate and then the hydrolysis of 5,10-methenyltetrahydrofolate to 10-formyltetrahydrofolate. This chain is Bifunctional protein FolD, found in Shewanella denitrificans (strain OS217 / ATCC BAA-1090 / DSM 15013).